Here is a 282-residue protein sequence, read N- to C-terminus: ATP synthase gamma chain (282 aa).

The protein belongs to the ATPase gamma chain family. F-type ATPases have 2 components, CF(1) - the catalytic core - and CF(0) - the membrane proton channel. CF(1) has five subunits: alpha(3), beta(3), gamma(1), delta(1), epsilon(1). CF(0) has three main subunits: a, b and c.

The protein localises to the cell membrane. In terms of biological role, produces ATP from ADP in the presence of a proton gradient across the membrane. The gamma chain is believed to be important in regulating ATPase activity and the flow of protons through the CF(0) complex. This is ATP synthase gamma chain from Clostridium botulinum (strain ATCC 19397 / Type A).